The chain runs to 547 residues: MEDEPTYPSFRQSLLVTISLCLTLFCVSLDETVLATAIPRITDQFQSLNDVGWYGSSYLFVFTATQMAWGKLYTMYPAKWVFLTGVTVFEVGSLVCGVSPTSGALIAGRSIAGLGAGSINAGAVLIISNTIPVQKRPIYLGCLGVVHGVVSVLGPVIGGLLTDHASWRWCFFLNLPIGAITVLGIVFCLSTNQPSAGHLSGKEKLRSMDLLGSAFFIPGILMLLLALEWGGSQYAWDSWRVILLFVLSAVALAVFAVVQVRAPEKATIAPRLVTNRNMLGLIGYIVGNSGGLFVFVYYLPIWLQAIKEFSASKSGLAILPTQLGMVAASLAGGILVTVVRYYTPFLIVSSLLAVAGAGLLSSLHPASGLGSILGYQVVLSVGIGLGAQNAMVVPSVVCAPGDVVMAIATLCFLQMLSSSIALTLAQTVFHSRLVTNLAHRAPSVDSALVEQGATRLRDRVPADLLPSVVGAYSQAVSETFYVGVAMCALSLLGSASMQWKRVPGHKEATEKVEGEGQGQGQQQEQDQGQGWGEVGESHALAHPTADK.

A run of 14 helical transmembrane segments spans residues 14–34 (LLVT…ETVL), 50–70 (DVGW…MAWG), 80–100 (WVFL…GVSP), 111–131 (IAGL…SNTI), 138–158 (IYLG…PVIG), 169–189 (WCFF…VFCL), 210–230 (LLGS…LEWG), 238–258 (SWRV…FAVV), 279–299 (LGLI…VYYL), 316–336 (LAIL…GILV), 343–363 (TPFL…LSSL), 366–386 (ASGL…IGLG), 392–412 (VVPS…TLCF), and 475–495 (AVSE…LGSA). A disordered region spans residues 503–547 (PGHKEATEKVEGEGQGQGQQQEQDQGQGWGEVGESHALAHPTADK). The segment covering 504 to 514 (GHKEATEKVEG) has biased composition (basic and acidic residues).

This sequence belongs to the major facilitator superfamily. TCR/Tet family.

It localises to the membrane. Its function is as follows. MFS-type transporter; part of the gene cluster that mediates the biosynthesis of the unguisins, gamma-aminobutyric acid (GABA)-containing fungal cyclic heptapeptides with the amino acid sequence cyclo-(D-Ala1-D-Val2-L-Phe3-D-Val4-D-Ala5-D-Trp6-GABA7) for unguisin A and cyclo-(D-Ala1-D-Val2-L-Leu3-D-Val4-D-Ala5-D-Trp6-GABA7) for unguisin B. May be involved in the secretion of unguisins. This is MFS-type transporter ungB from Aspergillus violaceofuscus (strain CBS 115571).